We begin with the raw amino-acid sequence, 143 residues long: Large ribosomal subunit protein uL11 (143 aa).

This sequence belongs to the universal ribosomal protein uL11 family. As to quaternary structure, part of the ribosomal stalk of the 50S ribosomal subunit. Interacts with L10 and the large rRNA to form the base of the stalk. L10 forms an elongated spine to which L12 dimers bind in a sequential fashion forming a multimeric L10(L12)X complex. Post-translationally, one or more lysine residues are methylated.

Functionally, forms part of the ribosomal stalk which helps the ribosome interact with GTP-bound translation factors. The chain is Large ribosomal subunit protein uL11 from Kocuria rhizophila (strain ATCC 9341 / DSM 348 / NBRC 103217 / DC2201).